We begin with the raw amino-acid sequence, 378 residues long: Chaperone protein DnaJ (378 aa).

Residues Asp-6–Gly-70 enclose the J domain. The CR-type zinc finger occupies Gly-137–Lys-219. Zn(2+) contacts are provided by Cys-150, Cys-153, Cys-167, Cys-170, Cys-193, Cys-196, Cys-207, and Cys-210. 4 CXXCXGXG motif repeats span residues Cys-150–Gly-157, Cys-167–Gly-174, Cys-193–Gly-200, and Cys-207–Gly-214.

It belongs to the DnaJ family. As to quaternary structure, homodimer. Zn(2+) is required as a cofactor.

It localises to the cytoplasm. Its function is as follows. Participates actively in the response to hyperosmotic and heat shock by preventing the aggregation of stress-denatured proteins and by disaggregating proteins, also in an autonomous, DnaK-independent fashion. Unfolded proteins bind initially to DnaJ; upon interaction with the DnaJ-bound protein, DnaK hydrolyzes its bound ATP, resulting in the formation of a stable complex. GrpE releases ADP from DnaK; ATP binding to DnaK triggers the release of the substrate protein, thus completing the reaction cycle. Several rounds of ATP-dependent interactions between DnaJ, DnaK and GrpE are required for fully efficient folding. Also involved, together with DnaK and GrpE, in the DNA replication of plasmids through activation of initiation proteins. The protein is Chaperone protein DnaJ of Lactobacillus delbrueckii subsp. bulgaricus (strain ATCC 11842 / DSM 20081 / BCRC 10696 / JCM 1002 / NBRC 13953 / NCIMB 11778 / NCTC 12712 / WDCM 00102 / Lb 14).